The chain runs to 863 residues: Axin-1 (863 aa).

The interval 1–81 (MNVQEQGFPL…PEGSASPTPP (81 aa)) is disordered. Positions 20–29 (APRPPVPGEE) match the Tankyrase-binding motif motif. Positions 34-61 (STDSRPVNHSFCSGKGTSIKSETSTATP) are enriched in polar residues. S75 bears the Phosphoserine mark. Phosphoserine; by CK1 is present on S77. The RGS domain occupies 88-211 (SLHSLLDDQD…LKSDIYLEYT (124 aa)). Residues 209–338 (EYTRTGSESP…DADTLSLTDS (130 aa)) are interaction with TP53. 3 disordered regions span residues 215 to 240 (SESPKVCSDQSSGSGTGKGMSGYLPT), 249 to 268 (CDQDADEDDGRDPLPPSRLT), and 315 to 344 (ATSANDSEQQSLSSDADTLSLTDSSVDGIP). The residue at position 217 (S217) is a Phosphoserine. Residues 249-258 (CDQDADEDDG) are compositionally biased toward acidic residues. Positions 325–339 (SLSSDADTLSLTDSS) are enriched in low complexity. The interval 348–432 (IRKQHRREMQ…EDGEMPSGPM (85 aa)) is interaction with GSK3B. Positions 353 to 411 (RREMQESIQVNGRVPLPHIPRTYRMPKEIRVEPQKFAEELIHRLEAVQRTREAEEKLEE) are interaction with SIAH1. The tract at residues 433 to 501 (ASHKLPSVPA…SPDSGHVAKT (69 aa)) is interaction with beta-catenin. S468 carries the phosphoserine; by CK1 modification. Position 480 is a phosphothreonine; by GSK3-beta (T480). At S485 the chain carries Phosphoserine; by GSK3-beta. S492 and S509 each carry phosphoserine. The interval 505–758 (GGTASGHGKH…PVLSVVPAVS (254 aa)) is interaction with RNF111. Residues 529 to 542 (HHRHVHHHVHHNSA) show a composition bias toward basic residues. Disordered stretches follow at residues 529–624 (HHRH…DAEK) and 642–664 (HRKAGHGSSGLRKQQAHESSRPL). A compositionally biased stretch (basic and acidic residues) spans 543 to 554 (RPKEQMEAEVAR). An interaction with PPP2CA region spans residues 572–790 (PRSYSENAGT…CDSIVVAYYF (219 aa)). The segment covering 575–584 (YSENAGTTLS) has biased composition (polar residues). Residues 678 to 753 (AQLRNSVQPS…RPACAPVLSV (76 aa)) are interaction with HIPK2. The 83-residue stretch at 781-863 (CDSIVVAYYF…KIIGKVEKVD (83 aa)) folds into the DIX domain. Residues K858 and K861 each participate in a glycyl lysine isopeptide (Lys-Gly) (interchain with G-Cter in SUMO) cross-link.

In terms of assembly, homodimer. Component of the beta-catenin destruction complex, containing at least CTNNB1, an axin and GSK3B, that regulates CTNNB1 protein levels through phosphorylation and ubiquitination. Interacts with GSK3B; the interaction hyperphosphorylates CTNNB1 leading to its ubiquitination and destruction. Interacts with DAXX; the interaction stimulates the interaction of DAXX with TP53, stimulates 'Ser-46' phosphorylation of TP53 and induces cell death on UV irradiation. Also interacts with APC, RNF111, SMAD6 and SMAD7. Interacts (via the C-terminal) with PPP1CA; the interaction dephosphorylates AXIN1 and regulates interaction with GSK3B. Interacts with PPP2CA; the interaction dephosphorylates AXIN1. Interacts with MDFI; the interaction decreases AXIN1-mediated JUN N-terminal kinase (JNK) activation. Interacts with MDFIC; the interaction inhibits beta-cateninin-mediated signaling and AXIN1-mediated JUN N-terminal kinase (JNK) activation. Binds ANKRD6, PIAS1, PIAS2, PIAS4, SUMO1, MAP3K1 and MAP3K4. Component of the AXIN1-HIPK2-TP53 complex. Interacts directly in the complex with TP53 and HIPK2. Interacts with DIXDC1; the interaction prevents interaction with MAP3K1. Interacts with AIDA; the interaction blocks the AXIN1-mediated JNK activation through disrupting AXIN1 homodimerization and Wnt signaling. Interacts with LRP5 (via its phosphorylated PPPSP motifs); the interaction is stimulated by WNT1 and GSK3B and activates beta-catenin signaling. Interacts with CTNNB1 (via the armadillo repeats 2-7). Interacts with MACF1. Found in a complex composed of MACF1, APC, AXIN1, CTNNB1 and GSK3B. Interacts with TNKS. Interacts with DAB2; the interaction is mutually exclusive with the AXIN1:PPP1CA interaction. Interacts with ZBED3 (via PPPSP motif); the interaction is direct, enhanced by protein kinase GSK3B and casein kinase CSNK1E activities and decreases GSK3B-induced beta-catenin serine and threonine phosphorylations. Interacts with WDR26. Interacts with GID8. Interacts with SIAH1 and SIAH2; both probably catalyze AXIN1 ubiquitination and subsequent proteasome-mediated ubiquitin-dependent degradation. Interaction with GSK3B and AXIN1 is competitive. In terms of processing, phosphorylation and dephosphorylation of AXIN1 regulates assembly and function of the beta-catenin complex. Phosphorylated by CK1 and GSK3B. Dephosphorylated by PPP1CA and PPP2CA. Phosphorylation by CK1 enhances binding of GSK3B to AXIN1. Also phosphorylated by CDK2 which regulates interaction with CTNBB1. Post-translationally, ADP-ribosylated by tankyrase TNKS and TNKS2. Poly-ADP-ribosylated protein is recognized by RNF146, followed by ubiquitination and subsequent activation of the Wnt signaling pathway. Ubiquitinated by RNF146 when poly-ADP-ribosylated, leading to its degradation and subsequent activation of the Wnt signaling pathway. Deubiquitinated by USP34, deubiquitinated downstream of beta-catenin stabilization step: deubiquitination is important for nuclear accumulation during Wnt signaling to positively regulate beta-catenin (CTNBB1)-mediated transcription. Sumoylation at Lys-858 and Lys-861 prevents ubiquitination and degradation. Sumoylation is required for AXIN1-mediated JNK activation. Ubiquitination by SIAH1 and SIAH2 induces its proteasomal degradation as part of the activation of the Wnt signaling pathway. As to expression, expressed in embryonic stem cells.

The protein localises to the cytoplasm. The protein resides in the nucleus. Its subcellular location is the cell membrane. It is found in the membrane. In terms of biological role, component of the beta-catenin destruction complex required for regulating CTNNB1 levels through phosphorylation and ubiquitination, and modulating Wnt-signaling. Controls dorsoventral patterning via two opposing effects; down-regulates CTNNB1 to inhibit the Wnt signaling pathway and ventralize embryos, but also dorsalizes embryos by activating a Wnt-independent JNK signaling pathway. In Wnt signaling, probably facilitates the phosphorylation of CTNNB1 and APC by GSK3B. Likely to function as a tumor suppressor. Facilitates the phosphorylation of TP53 by HIPK2 upon ultraviolet irradiation. Enhances TGF-beta signaling by recruiting the RNF111 E3 ubiquitin ligase and promoting the degradation of inhibitory SMAD7. Also a component of the AXIN1-HIPK2-TP53 complex which controls cell growth, apoptosis and development. This Mus musculus (Mouse) protein is Axin-1 (Axin1).